A 250-amino-acid polypeptide reads, in one-letter code: Ribonuclease HII (250 aa).

Positions 66–250 (QLVAGVDEVG…SFAPVSEYEK (185 aa)) constitute an RNase H type-2 domain. A divalent metal cation contacts are provided by aspartate 72, glutamate 73, and aspartate 164.

This sequence belongs to the RNase HII family. Mn(2+) serves as cofactor. Mg(2+) is required as a cofactor.

It is found in the cytoplasm. It carries out the reaction Endonucleolytic cleavage to 5'-phosphomonoester.. Endonuclease that specifically degrades the RNA of RNA-DNA hybrids. The protein is Ribonuclease HII of Lactobacillus gasseri (strain ATCC 33323 / DSM 20243 / BCRC 14619 / CIP 102991 / JCM 1131 / KCTC 3163 / NCIMB 11718 / NCTC 13722 / AM63).